The sequence spans 238 residues: Ribonuclease PH (238 aa).

Residues Arg86 and 124–126 (GTR) contribute to the phosphate site.

Belongs to the RNase PH family. In terms of assembly, homohexameric ring arranged as a trimer of dimers.

It catalyses the reaction tRNA(n+1) + phosphate = tRNA(n) + a ribonucleoside 5'-diphosphate. Its function is as follows. Phosphorolytic 3'-5' exoribonuclease that plays an important role in tRNA 3'-end maturation. Removes nucleotide residues following the 3'-CCA terminus of tRNAs; can also add nucleotides to the ends of RNA molecules by using nucleoside diphosphates as substrates, but this may not be physiologically important. Probably plays a role in initiation of 16S rRNA degradation (leading to ribosome degradation) during starvation. The chain is Ribonuclease PH from Brucella melitensis biotype 2 (strain ATCC 23457).